Reading from the N-terminus, the 239-residue chain is Endolytic peptidoglycan transglycosylase RlpA (239 aa).

A signal peptide spans 1–25 (MTLTRKTLFLLTAAFGTHSLQTASA). The SPOR domain occupies 160-239 (VAENKDIFID…GMVRAVLTAG (80 aa)).

It belongs to the RlpA family.

In terms of biological role, lytic transglycosylase with a strong preference for naked glycan strands that lack stem peptides. This Neisseria meningitidis serogroup B (strain ATCC BAA-335 / MC58) protein is Endolytic peptidoglycan transglycosylase RlpA.